A 1392-amino-acid chain; its full sequence is MAPGRKRGASKAKAKGQLVLGDLVLAKVKGFPAWPAKISRPEDWDRAPDPKKYFVQFFGTEEIAFVAPPDIQAFTSEAKSKLLARCQGKTVKYFAQAVEQICTAFEGLQNHKSNALGDEDSLDATEPGLTKAEIVDGTDHIVIESERTDNFNFRVDPCFPKLDENNGEERKAEIRKLDSSSFLESKVKTTSPVSESLEHSSFDPKIKKEDFDKGTDGSACNEHFGNGQKKLANGKRIKKEAGGSDRKGEDTVHRDKSNNSHVPGGRTASGNSDSKKSKGLLTEKTSSKVSADKHENSPGIKVGVSGKKRRLESEQGKLAPRVDESSRAAKKPRCESADNKVKCEIDDGSDSTGTVSDIKREIVLGLGARGGNFQYDKEAVAYTKRQRQTMEHATSPSFSGSRDKSGKGHLEQKDRSSPVRNVKAPAAQSLKKRRAVCIYDEDDDEDPKTPLHGKPAIVPQAASVLTDGPKRANVCHSTSTKAKISAGSTESTEVRKFPLRKHCEDASRVLPSNAENSTNSLPVVKPINELPPKDVKQILQSPKMSPQLVLTNKHVAGQHKVVKSSVKVSGVVMAKKPQSDSCKEAVAGSDKISSSQSQPANQRHKSASVGERLTVVSKAASRLNDSGSRDMSEDLSAAMLDLNREKGSATFTSAKTPDSAASMKDLIAAAQAKRKLAHTQNSIFGNLNPSFLSISDTQGRSHSPFMVQNASASAAISMPLVVQGHHQQGSSPSNHGHQSLSRNQIETDDNEERRLSSGHKSVGGSLSCSTEAAISRDAFEGMLETLSRTRESIGRATRLAIDCAKYGLASEVVELLIRKLESESHFHRKVDLFFLVDSITQHSHSQKGIAGASYVPTVQAALPRLLGAAAPPGTGASDNRRKCLKVLKLWLERKVFPESLLRRYIDDIRASGDDATGGFSLRRPSRSERAVDDPIREMEGMLVDEYGSNATFQLPGFFSSHNFEDDEEDDDLPTSQKEKSTSAGERVSALDDLEIHDTSSDKCHRVLEDVDHELEMEDVSGQRKDVAPSSFCENKTKEQSLDVMEPVAEKSTEFNPLPEDSPPLPQESPPPLPPLPPSPPPPSPPLPPSSLPPPPPAALFPPLPPPPSQPPPPPLSPPPSPPPPPPPPSQSLTTQLSIASHHQIPFQPGFPPPTYPLSHQTYPGSMQQDRSSIFTGDQIVQGPGNSSRGGLVEGAGKPEYFVQQSSSFSPAGVCSSREPSSFTSSRQLEFGNSDVLFNPEASSQNHRFQPSTPLSQRPMVRLPSAPSSHFSYPSHIQSQSQHSYTHPYPFPPQRDDARRYRNEEPWRIPSSGHSAENQNGAWIHGRNSHPGLPRVTDSFFRPPPERPPSGTMNYQPSAASNLQAVPAIPGHTAPQMLPSRPDIPTVNCWRPA.

The region spanning 20 to 77 (LGDLVLAKVKGFPAWPAKISRPEDWDRAPDPKKYFVQFFGTEEIAFVAPPDIQAFTSE) is the PWWP domain. Residues 184 to 194 (ESKVKTTSPVS) show a composition bias toward polar residues. Disordered regions lie at residues 184 to 354 (ESKV…STGT), 384 to 428 (KRQR…PAAQ), 575 to 613 (KKPQSDSCKEAVAGSDKISSSQSQPANQRHKSASVGERL), and 723 to 766 (QGHH…GGSL). 3 stretches are compositionally biased toward basic and acidic residues: residues 196–215 (SLEHSSFDPKIKKEDFDKGT), 239–258 (KEAGGSDRKGEDTVHRDKSN), and 311–345 (LESEQGKLAPRVDESSRAAKKPRCESADNKVKCEI). Residues 391–400 (EHATSPSFSG) show a composition bias toward polar residues. The span at 401–417 (SRDKSGKGHLEQKDRSS) shows a compositional bias: basic and acidic residues. Composition is skewed to polar residues over residues 591–601 (KISSSQSQPAN) and 725–744 (HHQQGSSPSNHGHQSLSRNQ). Residues 771-912 (EAAISRDAFE…RYIDDIRASG (142 aa)) enclose the CID domain. Disordered regions lie at residues 957-986 (FFSSHNFEDDEEDDDLPTSQKEKSTSAGER), 1014-1356 (LEME…NYQP), and 1369-1392 (PGHTAPQMLPSRPDIPTVNCWRPA). The segment covering 1059–1129 (EDSPPLPQES…SPPPPPPPPS (71 aa)) has biased composition (pro residues). Over residues 1157-1175 (LSHQTYPGSMQQDRSSIFT) the composition is skewed to polar residues. Low complexity predominate over residues 1215–1225 (SSREPSSFTSS). Composition is skewed to polar residues over residues 1240–1255 (EASSQNHRFQPSTPLS) and 1265–1284 (APSSHFSYPSHIQSQSQHSY). The segment covering 1293–1306 (QRDDARRYRNEEPW) has biased composition (basic and acidic residues). Positions 1311 to 1320 (SGHSAENQNG) are enriched in polar residues.

As to expression, expressed in the inflorescence meristem, floral primordia, inflorescence stem, and floral pedicels. Also detected in the shoot apical meristem, stems, leaves, embryos, and roots.

Its subcellular location is the nucleus. Transcription factor that functions as a repressor of flowering by enhancing the expression of several genes that delay flowering including FLC, FLM/MAF1, MAF2 and SVP. Also acts in the floral homeotic AGAMOUS (AG) pathway, specifically by processing the AGAMOUS pre-mRNA. Functions in association with HUA1 and HEN4 in AG pre-mRNA processing. Involved in all three aspects of the AG functions, the specification of stamen and carpel identities, the control of floral determinacy, and the spatial restriction of AP1 expression. Acts as a transcription regulator that controls anthocyanin accumulation. This is ENHANCER OF AG-4 protein 2 from Arabidopsis thaliana (Mouse-ear cress).